The sequence spans 518 residues: Probable cytosol aminopeptidase (518 aa).

Mn(2+) is bound by residues Lys270 and Asp275. The active site involves Lys282. Residues Asp293, Asp352, and Glu354 each coordinate Mn(2+). Arg356 is an active-site residue. The span at 495-507 (SRTTRQPGSTGET) shows a compositional bias: polar residues. The tract at residues 495–518 (SRTTRQPGSTGETGSRKNRRKSKE) is disordered.

This sequence belongs to the peptidase M17 family. It depends on Mn(2+) as a cofactor.

It is found in the cytoplasm. The enzyme catalyses Release of an N-terminal amino acid, Xaa-|-Yaa-, in which Xaa is preferably Leu, but may be other amino acids including Pro although not Arg or Lys, and Yaa may be Pro. Amino acid amides and methyl esters are also readily hydrolyzed, but rates on arylamides are exceedingly low.. It carries out the reaction Release of an N-terminal amino acid, preferentially leucine, but not glutamic or aspartic acids.. In terms of biological role, presumably involved in the processing and regular turnover of intracellular proteins. Catalyzes the removal of unsubstituted N-terminal amino acids from various peptides. The chain is Probable cytosol aminopeptidase from Nitrosospira multiformis (strain ATCC 25196 / NCIMB 11849 / C 71).